The following is a 205-amino-acid chain: uncharacterized protein (205 aa).

A helical membrane pass occupies residues Ile5 to Tyr27.

To T.maritima TM1570.

Its subcellular location is the membrane. This is an uncharacterized protein from Aquifex aeolicus (strain VF5).